A 549-amino-acid chain; its full sequence is Cilia- and flagella-associated protein 45 (549 aa).

The interval 1–29 (MPLSPAGVLSSTSTASNRSRNRPRYRTKA) is disordered. Coiled coils occupy residues 119–232 (REEL…MMEV), 259–393 (IVEQ…KRNQ), and 434–522 (AVQV…KIEE). The interval 388–416 (RAKRNQEVADREWRRKEKENAQKKMETEA) is disordered.

It belongs to the CFAP45 family. Microtubule inner protein component of sperm flagellar doublet microtubules. Interacts with AK8; dimerization with AK8 may create a cavity at the interface of the dimer that can accommodate AMP. Interacts with CFAP52. Interacts with ENKUR. Directly interacts with DNALI1. Interacts with DNAH11. Interacts with DNAI1. Expressed in respiratory cells (at protein level).

It is found in the cytoplasm. The protein localises to the cytoskeleton. The protein resides in the cilium axoneme. Its subcellular location is the flagellum axoneme. It localises to the cell projection. It is found in the cilium. The protein localises to the flagellum. Microtubule inner protein (MIP) part of the dynein-decorated doublet microtubules (DMTs) in cilia axoneme, which is required for motile cilia beating. It is an AMP-binding protein that may facilitate dynein ATPase-dependent ciliary and flagellar beating via adenine nucleotide homeostasis. May function as a donor of AMP to AK8 and hence promote ADP production. The chain is Cilia- and flagella-associated protein 45 (CFAP45) from Sus scrofa (Pig).